Reading from the N-terminus, the 360-residue chain is Photosystem II protein D1 1 (360 aa).

A run of 3 helical transmembrane segments spans residues 29–46 (YIGW…TATT), 118–133 (HFLI…QWEL), and 142–156 (WICV…AATA). Histidine 118 contributes to the chlorophyll a binding site. Tyrosine 126 provides a ligand contact to pheophytin a. Aspartate 170 and glutamate 189 together coordinate [CaMn4O5] cluster. Residues 197–218 (FHMLGVAGVFGGALFAAMHGSL) traverse the membrane as a helical segment. A chlorophyll a-binding site is contributed by histidine 198. A quinone-binding positions include histidine 215 and 264–265 (SF). Residue histidine 215 coordinates Fe cation. Histidine 272 lines the Fe cation pocket. The helical transmembrane segment at 274 to 288 (FLGAWPVVGIWFAAL) threads the bilayer. Residues histidine 332, glutamate 333, aspartate 342, and alanine 344 each contribute to the [CaMn4O5] cluster site. Positions 345–360 (SGDAQMVALNAPAIEG) are excised as a propeptide.

It belongs to the reaction center PufL/M/PsbA/D family. In terms of assembly, PSII is composed of 1 copy each of membrane proteins PsbA, PsbB, PsbC, PsbD, PsbE, PsbF, PsbH, PsbI, PsbJ, PsbK, PsbL, PsbM, PsbT, PsbX, PsbY, PsbZ, Psb30/Ycf12, peripheral proteins PsbO, CyanoQ (PsbQ), PsbU, PsbV and a large number of cofactors. It forms dimeric complexes. The D1/D2 heterodimer binds P680, chlorophylls that are the primary electron donor of PSII, and subsequent electron acceptors. It shares a non-heme iron and each subunit binds pheophytin, quinone, additional chlorophylls, carotenoids and lipids. D1 provides most of the ligands for the Mn4-Ca-O5 cluster of the oxygen-evolving complex (OEC). There is also a Cl(-1) ion associated with D1 and D2, which is required for oxygen evolution. The PSII complex binds additional chlorophylls, carotenoids and specific lipids. serves as cofactor. In terms of processing, C-terminally processed by CtpA; processing is essential to allow assembly of the oxygen-evolving complex and photosynthetic growth. Post-translationally, tyr-161 forms a radical intermediate that is referred to as redox-active TyrZ, YZ or Y-Z. C-terminally processed by CtpA; processing is essential to allow assembly of the oxygen-evolving complex and thus photosynthetic growth.

It is found in the cellular thylakoid membrane. It carries out the reaction 2 a plastoquinone + 4 hnu + 2 H2O = 2 a plastoquinol + O2. In terms of biological role, photosystem II (PSII) is a light-driven water:plastoquinone oxidoreductase that uses light energy to abstract electrons from H(2)O, generating O(2) and a proton gradient subsequently used for ATP formation. It consists of a core antenna complex that captures photons, and an electron transfer chain that converts photonic excitation into a charge separation. The D1/D2 (PsbA/PsbD) reaction center heterodimer binds P680, the primary electron donor of PSII as well as several subsequent electron acceptors. The chain is Photosystem II protein D1 1 from Synechocystis sp. (strain ATCC 27184 / PCC 6803 / Kazusa).